The chain runs to 698 residues: Methionine synthase reductase (698 aa).

The Flavodoxin-like domain maps to 5–147 (LLLYATQQGQ…VVEPWIAGLW (143 aa)). 93 to 124 (LLGLGDSEYTYFCNGGKIIDKRLQELGARHFY) lines the FMN pocket. The tract at residues 166-247 (ALPVASPASS…ASLNIPGLPP (82 aa)) is hinge. Phosphoserine occurs at positions 171 and 189. In terms of domain architecture, FAD-binding FR-type spans 271-533 (DPVFQVPISK…PRTTNSFHLP (263 aa)). Position 291 (K291) interacts with NADP(+). FAD is bound by residues 451 to 454 (RPYS) and 487 to 490 (GVCT). NADP(+) is bound by residues 610–611 (SR), 624–626 (YVQ), and D659. W697 is an FAD binding site.

Forms a multiprotein complex with MMACHC, MMADHC and MTR. It depends on FAD as a cofactor. FMN is required as a cofactor. As to expression, found in all tissues tested, particularly abundant in skeletal muscle.

The protein localises to the cytoplasm. The catalysed reaction is 2 methylcob(III)alamin-[methionine synthase] + 2 S-adenosyl-L-homocysteine + NADP(+) + H(+) = 2 cob(II)alamin-[methionine synthase] + 2 S-adenosyl-L-methionine + NADPH. The enzyme catalyses 2 cob(II)alamin + A + 2 H2O + 2 H(+) = 2 aquacob(III)alamin + AH2. Key enzyme in methionine and folate homeostasis responsible for the reactivation of methionine synthase (MTR/MS) activity by catalyzing the reductive methylation of MTR-bound cob(II)alamin. Cobalamin (vitamin B12) forms a complex with MTR to serve as an intermediary in methyl transfer reactions that cycles between MTR-bound methylcob(III)alamin and MTR bound-cob(I)alamin forms, and occasional oxidative escape of the cob(I)alamin intermediate during the catalytic cycle leads to the inactive cob(II)alamin species. The processing of cobalamin in the cytosol occurs in a multiprotein complex composed of at least MMACHC, MMADHC, MTRR and MTR which may contribute to shuttle safely and efficiently cobalamin towards MTR in order to produce methionine. Also necessary for the utilization of methyl groups from the folate cycle, thereby affecting transgenerational epigenetic inheritance. Also acts as a molecular chaperone for methionine synthase by stabilizing apoMTR and incorporating methylcob(III)alamin into apoMTR to form the holoenzyme. Also serves as an aquacob(III)alamin reductase by reducing aquacob(III)alamin to cob(II)alamin; this reduction leads to stimulation of the conversion of apoMTR and aquacob(III)alamin to MTR holoenzyme. The protein is Methionine synthase reductase of Homo sapiens (Human).